Here is a 190-residue protein sequence, read N- to C-terminus: Xanthine phosphoribosyltransferase (190 aa).

Xanthine contacts are provided by Leu-20 and Asn-27. 128–132 serves as a coordination point for 5-phospho-alpha-D-ribose 1-diphosphate; it reads ANGKA. Position 156 (Lys-156) interacts with xanthine.

It belongs to the purine/pyrimidine phosphoribosyltransferase family. Xpt subfamily. As to quaternary structure, homodimer.

It localises to the cytoplasm. The catalysed reaction is XMP + diphosphate = xanthine + 5-phospho-alpha-D-ribose 1-diphosphate. It functions in the pathway purine metabolism; XMP biosynthesis via salvage pathway; XMP from xanthine: step 1/1. In terms of biological role, converts the preformed base xanthine, a product of nucleic acid breakdown, to xanthosine 5'-monophosphate (XMP), so it can be reused for RNA or DNA synthesis. This is Xanthine phosphoribosyltransferase from Pseudomonas fluorescens (strain ATCC BAA-477 / NRRL B-23932 / Pf-5).